Reading from the N-terminus, the 156-residue chain is MNINLTLIGQSIAFAIFVLFCMKFIWPALMGAISERQQKIADGLNAAEKAKADLASAEQSVEQELATAKAKAAALIEQANKSANQLIEEAKAQAQVEGERIRQQARESIDLEINQARESLRTQVSELAVLGAEQILKEKVDQQTHANMLNELAAKL.

A helical membrane pass occupies residues 12–32 (IAFAIFVLFCMKFIWPALMGA).

The protein belongs to the ATPase B chain family. In terms of assembly, F-type ATPases have 2 components, F(1) - the catalytic core - and F(0) - the membrane proton channel. F(1) has five subunits: alpha(3), beta(3), gamma(1), delta(1), epsilon(1). F(0) has three main subunits: a(1), b(2) and c(10-14). The alpha and beta chains form an alternating ring which encloses part of the gamma chain. F(1) is attached to F(0) by a central stalk formed by the gamma and epsilon chains, while a peripheral stalk is formed by the delta and b chains.

The protein resides in the cell inner membrane. Functionally, f(1)F(0) ATP synthase produces ATP from ADP in the presence of a proton or sodium gradient. F-type ATPases consist of two structural domains, F(1) containing the extramembraneous catalytic core and F(0) containing the membrane proton channel, linked together by a central stalk and a peripheral stalk. During catalysis, ATP synthesis in the catalytic domain of F(1) is coupled via a rotary mechanism of the central stalk subunits to proton translocation. Its function is as follows. Component of the F(0) channel, it forms part of the peripheral stalk, linking F(1) to F(0). In Psychrobacter sp. (strain PRwf-1), this protein is ATP synthase subunit b.